Here is a 797-residue protein sequence, read N- to C-terminus: Protocadherin beta-11 (797 aa).

A signal peptide spans Met1–Ala26. Residues Gly27–Leu690 lie on the Extracellular side of the membrane. 5 consecutive Cadherin domains span residues Val35–Phe133, Met138–Phe242, Tyr247–Ile347, Ile352–Phe451, and Tyr456–Val561. 4 N-linked (GlcNAc...) asparagine glycosylation sites follow: Asn418, Asn436, Asn487, and Asn567. Residues Gly568–Leu671 enclose the Cadherin 6 domain. The helical transmembrane segment at Val691–Val711 threads the bilayer. Topologically, residues Arg712–Phe797 are cytoplasmic.

The protein localises to the cell membrane. Functionally, potential calcium-dependent cell-adhesion protein. May be involved in the establishment and maintenance of specific neuronal connections in the brain. In Pan troglodytes (Chimpanzee), this protein is Protocadherin beta-11 (PCDHB11).